A 479-amino-acid polypeptide reads, in one-letter code: Cell division protein FtsA (479 aa).

The disordered stretch occupies residues 417–458 (QGRQTERKENEQRDNTDRQREDTPKQTVKKKEKTGPSFGDKL). Positions 420 to 440 (QTERKENEQRDNTDRQREDTP) are enriched in basic and acidic residues.

This sequence belongs to the FtsA/MreB family. As to quaternary structure, self-interacts. Interacts with FtsZ.

The protein localises to the cell inner membrane. Its function is as follows. Cell division protein that is involved in the assembly of the Z ring. May serve as a membrane anchor for the Z ring. The polypeptide is Cell division protein FtsA (Porphyromonas gingivalis (strain ATCC BAA-308 / W83)).